The primary structure comprises 667 residues: Glycine--tRNA ligase beta subunit (667 aa).

The protein belongs to the class-II aminoacyl-tRNA synthetase family. In terms of assembly, tetramer of two alpha and two beta subunits.

The protein localises to the cytoplasm. It carries out the reaction tRNA(Gly) + glycine + ATP = glycyl-tRNA(Gly) + AMP + diphosphate. This Rickettsia canadensis (strain McKiel) protein is Glycine--tRNA ligase beta subunit.